We begin with the raw amino-acid sequence, 808 residues long: Phenylalanine--tRNA ligase beta subunit (808 aa).

The region spanning 40-149 (RPELDFVKIV…DQAEVGKTIR (110 aa)) is the tRNA-binding domain. Residues 407-484 (HKEVRIHTDI…RTKGYDTIQV (78 aa)) form the B5 domain. Residues Asp462, Asp468, Glu471, and Glu472 each coordinate Mg(2+). Positions 716–808 (SQFPEAEIDL…LAGKNGFVLR (93 aa)) constitute an FDX-ACB domain.

Belongs to the phenylalanyl-tRNA synthetase beta subunit family. Type 1 subfamily. As to quaternary structure, tetramer of two alpha and two beta subunits. Mg(2+) is required as a cofactor.

It localises to the cytoplasm. It carries out the reaction tRNA(Phe) + L-phenylalanine + ATP = L-phenylalanyl-tRNA(Phe) + AMP + diphosphate + H(+). This Leptospira interrogans serogroup Icterohaemorrhagiae serovar copenhageni (strain Fiocruz L1-130) protein is Phenylalanine--tRNA ligase beta subunit.